A 130-amino-acid chain; its full sequence is Protein NrdI (130 aa).

Belongs to the NrdI family.

Probably involved in ribonucleotide reductase function. In Bartonella bacilliformis (strain ATCC 35685 / KC583 / Herrer 020/F12,63), this protein is Protein NrdI.